An 83-amino-acid polypeptide reads, in one-letter code: Small ribosomal subunit protein uS17 (83 aa).

Belongs to the universal ribosomal protein uS17 family. In terms of assembly, part of the 30S ribosomal subunit.

In terms of biological role, one of the primary rRNA binding proteins, it binds specifically to the 5'-end of 16S ribosomal RNA. This Thermodesulfovibrio yellowstonii (strain ATCC 51303 / DSM 11347 / YP87) protein is Small ribosomal subunit protein uS17.